Here is a 122-residue protein sequence, read N- to C-terminus: Large ribosomal subunit protein uL14 (122 aa).

It belongs to the universal ribosomal protein uL14 family. Part of the 50S ribosomal subunit. Forms a cluster with proteins L3 and L19. In the 70S ribosome, L14 and L19 interact and together make contacts with the 16S rRNA in bridges B5 and B8.

Its function is as follows. Binds to 23S rRNA. Forms part of two intersubunit bridges in the 70S ribosome. The sequence is that of Large ribosomal subunit protein uL14 from Ligilactobacillus salivarius (strain UCC118) (Lactobacillus salivarius).